The chain runs to 583 residues: Mitogen-activated protein kinase 4 (583 aa).

The Protein kinase domain occupies 20-312 (FIDFQPLGFG…AEMGLQHPYM (293 aa)). ATP-binding positions include 26-34 (LGFGVNGLV) and Lys-49. Asp-149 serves as the catalytic Proton acceptor. Ser-186 is modified (phosphoserine; by PAK1, PAK2 and PAK3). Positions 186 to 188 (SEG) match the SEG motif motif. The FRIEDE motif motif lies at 328–333 (FRIEDE). 2 stretches are compositionally biased toward basic and acidic residues: residues 366 to 379 (DRCQ…RDPR) and 391 to 410 (VDPR…QSHS). Residues 366 to 410 (DRCQDASEVQRDPRAGSTPLAEDVQVDPRKDSQSSSERFLEQSHS) are disordered. The residue at position 430 (Ser-430) is a Phosphoserine. A disordered region spans residues 495-531 (STQSGSERASPPPDAPEPRLSASPPGHPTPIDGGASP).

This sequence belongs to the protein kinase superfamily. CMGC Ser/Thr protein kinase family. MAP kinase subfamily. In terms of assembly, homodimer. Heterodimer with ERK3/MAPK6. Interacts with (via FRIEDE motif) MAPKAPK5. Requires Mg(2+) as cofactor. Phosphorylated at Ser-186 by PAK1, PAK2 and PAK3 resulting in catalytic activation. Phosphorylated by MAPKAPK5 at other sites.

The protein resides in the cytoplasm. The protein localises to the nucleus. The enzyme catalyses L-seryl-[protein] + ATP = O-phospho-L-seryl-[protein] + ADP + H(+). It catalyses the reaction L-threonyl-[protein] + ATP = O-phospho-L-threonyl-[protein] + ADP + H(+). With respect to regulation, activated by phosphorylation at Ser-186. Its function is as follows. Atypical MAPK protein. Phosphorylates microtubule-associated protein 2 (MAP2) and MAPKAPK5. The precise role of the complex formed with MAPKAPK5 is still unclear, but the complex follows a complex set of phosphorylation events: upon interaction with atypical MAPKAPK5, ERK4/MAPK4 is phosphorylated at Ser-186 and then mediates phosphorylation and activation of MAPKAPK5, which in turn phosphorylates ERK4/MAPK4. May promote entry in the cell cycle. This is Mitogen-activated protein kinase 4 (Mapk4) from Mus musculus (Mouse).